The sequence spans 315 residues: Ornithine carbamoyltransferase, anabolic (315 aa).

Carbamoyl phosphate-binding positions include 57 to 60 (STRT), Q84, R108, and 135 to 138 (HPCQ). L-ornithine-binding positions include N166, D230, and 234 to 235 (SM). Residues 270 to 271 (CL) and R298 contribute to the carbamoyl phosphate site.

It belongs to the aspartate/ornithine carbamoyltransferase superfamily. OTCase family. In terms of assembly, homododecamer (tetramer of trimers).

The protein resides in the cytoplasm. The catalysed reaction is carbamoyl phosphate + L-ornithine = L-citrulline + phosphate + H(+). The protein operates within amino-acid biosynthesis; L-arginine biosynthesis; L-arginine from L-ornithine and carbamoyl phosphate: step 1/3. Its activity is regulated as follows. Inhibited by the bisubstrate delta-N-phosphonoacetyl-L-ornithine (PALO). Functionally, reversibly catalyzes the transfer of the carbamoyl group from carbamoyl phosphate (CP) to the N(epsilon) atom of ornithine (ORN) to produce L-citrulline, which is a substrate for argininosuccinate synthetase, the enzyme involved in the final step in arginine biosynthesis. The protein is Ornithine carbamoyltransferase, anabolic of Pyrococcus furiosus (strain ATCC 43587 / DSM 3638 / JCM 8422 / Vc1).